The chain runs to 337 residues: Anthranilate phosphoribosyltransferase (337 aa).

Residues Gly-81, 84 to 85 (GD), Ser-89, 91 to 94 (NVST), 109 to 117 (KHGNRAASS), and Ala-121 each bind 5-phospho-alpha-D-ribose 1-diphosphate. Position 81 (Gly-81) interacts with anthranilate. Ser-93 is a Mg(2+) binding site. Asn-112 contributes to the anthranilate binding site. Arg-167 contacts anthranilate. Mg(2+) contacts are provided by Asp-226 and Glu-227.

Belongs to the anthranilate phosphoribosyltransferase family. Homodimer. Mg(2+) serves as cofactor.

The catalysed reaction is N-(5-phospho-beta-D-ribosyl)anthranilate + diphosphate = 5-phospho-alpha-D-ribose 1-diphosphate + anthranilate. Its pathway is amino-acid biosynthesis; L-tryptophan biosynthesis; L-tryptophan from chorismate: step 2/5. Catalyzes the transfer of the phosphoribosyl group of 5-phosphorylribose-1-pyrophosphate (PRPP) to anthranilate to yield N-(5'-phosphoribosyl)-anthranilate (PRA). The protein is Anthranilate phosphoribosyltransferase of Methylobacterium nodulans (strain LMG 21967 / CNCM I-2342 / ORS 2060).